A 149-amino-acid polypeptide reads, in one-letter code: Glutamyl-tRNA(Gln) amidotransferase subunit C, mitochondrial (149 aa).

The transit peptide at 1 to 25 directs the protein to the mitochondrion; that stretch reads MNHLHRLFRITQVDRPVLLAITRRL.

The protein belongs to the GatC family. As to quaternary structure, subunit of the heterotrimeric GatCAB amidotransferase (AdT) complex, composed of A, B and C subunits.

Its subcellular location is the mitochondrion. The catalysed reaction is L-glutamyl-tRNA(Gln) + L-glutamine + ATP + H2O = L-glutaminyl-tRNA(Gln) + L-glutamate + ADP + phosphate + H(+). Its function is as follows. Allows the formation of correctly charged Gln-tRNA(Gln) through the transamidation of misacylated Glu-tRNA(Gln) in the mitochondria. The reaction takes place in the presence of glutamine and ATP through an activated gamma-phospho-Glu-tRNA(Gln). In Branchiostoma floridae (Florida lancelet), this protein is Glutamyl-tRNA(Gln) amidotransferase subunit C, mitochondrial.